The primary structure comprises 633 residues: Probable potassium transport system protein Kup 2 (633 aa).

Helical transmembrane passes span 18 to 38 (FLAMTIGAIGVVYGDIGTSPL), 61 to 81 (LISLMLWTLTIIVTFKYVLFL), 109 to 129 (LMFMAGILGAALFIGDAMITP), 145 to 165 (PAFHDYVLPISVGIMVLLFAV), 173 to 193 (VSIFFGPITLIWFLVLGAAGV), 211 to 231 (AVTFLWNAGFVGFIVLGAVFL), 255 to 275 (WFAVVFPALTLNYLGQGALVL), 287 to 307 (LMFPNWALLPVVLLATAATII), 345 to 365 (IYLPFVNNALLAGVIVLMFMF), 371 to 391 (LATAYGISVTGAMVVTTVLAF), 405 to 425 (ATAVLLPLLVLELFFLGANLF), and 427 to 447 (IHDGGYVPILIAGTLMTTMWT).

The protein belongs to the HAK/KUP transporter (TC 2.A.72) family.

The protein localises to the cell inner membrane. The enzyme catalyses K(+)(in) + H(+)(in) = K(+)(out) + H(+)(out). Its function is as follows. Transport of potassium into the cell. Likely operates as a K(+):H(+) symporter. The protein is Probable potassium transport system protein Kup 2 of Sinorhizobium medicae (strain WSM419) (Ensifer medicae).